The primary structure comprises 618 residues: Poly(A)-specific ribonuclease PARN-like (618 aa).

Positions 54, 56, 332, and 418 each coordinate a divalent metal cation. Residues 588 to 607 form a disordered region; it reads ALESSDTDPDSDTKPSEIDW.

Belongs to the CAF1 family. A divalent metal cation is required as a cofactor.

Its subcellular location is the nucleus. It is found in the cytoplasm. The enzyme catalyses Exonucleolytic cleavage of poly(A) to 5'-AMP.. Functionally, 3'-exoribonuclease that has a preference for poly(A) tails of mRNAs, thereby efficiently degrading poly(A) tails. Exonucleolytic degradation of the poly(A) tail is often the first step in the decay of eukaryotic mRNAs. This Arabidopsis thaliana (Mouse-ear cress) protein is Poly(A)-specific ribonuclease PARN-like.